Consider the following 298-residue polypeptide: Putative S-adenosyl-L-methionine-dependent methyltransferase MAV_0778 (298 aa).

S-adenosyl-L-methionine contacts are provided by residues aspartate 124 and 153–154; that span reads DL.

This sequence belongs to the UPF0677 family.

Its function is as follows. Exhibits S-adenosyl-L-methionine-dependent methyltransferase activity. This Mycobacterium avium (strain 104) protein is Putative S-adenosyl-L-methionine-dependent methyltransferase MAV_0778.